A 239-amino-acid chain; its full sequence is Ribosomal RNA small subunit methyltransferase G (239 aa).

S-adenosyl-L-methionine contacts are provided by residues Gly-78, Phe-83, 129–130, and Arg-148; that span reads AE.

The protein belongs to the methyltransferase superfamily. RNA methyltransferase RsmG family.

It is found in the cytoplasm. Specifically methylates the N7 position of a guanine in 16S rRNA. The sequence is that of Ribosomal RNA small subunit methyltransferase G from Clostridium tetani (strain Massachusetts / E88).